Consider the following 302-residue polypeptide: Tyrosine recombinase XerC (302 aa).

One can recognise a Core-binding (CB) domain in the interval 2 to 89 (QPLMEQIRAF…AIRSFYRHLL (88 aa)). Residues 110–289 (RLPFHLDIDQ…SLDRLMEVYD (180 aa)) form the Tyr recombinase domain. Catalysis depends on residues R150, K174, H241, R244, and H267. Catalysis depends on Y276, which acts as the O-(3'-phospho-DNA)-tyrosine intermediate.

Belongs to the 'phage' integrase family. XerC subfamily. As to quaternary structure, forms a cyclic heterotetrameric complex composed of two molecules of XerC and two molecules of XerD.

It is found in the cytoplasm. In terms of biological role, site-specific tyrosine recombinase, which acts by catalyzing the cutting and rejoining of the recombining DNA molecules. The XerC-XerD complex is essential to convert dimers of the bacterial chromosome into monomers to permit their segregation at cell division. It also contributes to the segregational stability of plasmids. This chain is Tyrosine recombinase XerC, found in Pelobacter propionicus (strain DSM 2379 / NBRC 103807 / OttBd1).